We begin with the raw amino-acid sequence, 250 residues long: Peptidyl-tRNA hydrolase, mitochondrial (250 aa).

Residues 1–45 (MRLLSGASASRIPCPLLSLARARARCLPVPASATACRAASSSAAA) constitute a mitochondrion transit peptide. Tyr68 is a binding site for tRNA. The active-site Proton acceptor is the His73. Positions 118, 120, and 166 each coordinate tRNA.

It belongs to the PTH family.

Its subcellular location is the mitochondrion. The catalysed reaction is an N-acyl-L-alpha-aminoacyl-tRNA + H2O = an N-acyl-L-amino acid + a tRNA + H(+). The natural substrate for this enzyme may be peptidyl-tRNAs which drop off the ribosome during protein synthesis. This chain is Peptidyl-tRNA hydrolase, mitochondrial, found in Oryza sativa subsp. japonica (Rice).